A 490-amino-acid polypeptide reads, in one-letter code: Probable glycine dehydrogenase (decarboxylating) subunit 2 (490 aa).

Position 273 is an N6-(pyridoxal phosphate)lysine (Lys-273).

This sequence belongs to the GcvP family. C-terminal subunit subfamily. In terms of assembly, the glycine cleavage system is composed of four proteins: P, T, L and H. In this organism, the P 'protein' is a heterodimer of two subunits. It depends on pyridoxal 5'-phosphate as a cofactor.

It carries out the reaction N(6)-[(R)-lipoyl]-L-lysyl-[glycine-cleavage complex H protein] + glycine + H(+) = N(6)-[(R)-S(8)-aminomethyldihydrolipoyl]-L-lysyl-[glycine-cleavage complex H protein] + CO2. In terms of biological role, the glycine cleavage system catalyzes the degradation of glycine. The P protein binds the alpha-amino group of glycine through its pyridoxal phosphate cofactor; CO(2) is released and the remaining methylamine moiety is then transferred to the lipoamide cofactor of the H protein. The chain is Probable glycine dehydrogenase (decarboxylating) subunit 2 from Staphylococcus aureus (strain MRSA252).